A 119-amino-acid polypeptide reads, in one-letter code: Probable cyclase otaY (119 aa).

Belongs to the aurE cyclase family.

Its pathway is mycotoxin biosynthesis. In terms of biological role, probable cyclase; part of the gene cluster that mediates the biosynthesis of ochratoxin A (OTA), a mycotoxin composed of a chlorinated type I polyketide dihydroisocoumarin moiety linked to L-phenylalanine, and demonstrated to have nephrotoxic, immunotoxic, genotoxic, neurotoxic, and teratogenic properties. OtaY is probably involved in the polyketide cyclization. The pathway begins with the highly reducing polyketide synthase otaA that catalyzes the formation of the isocoumarin group during the initial stages of biosynthesis, starting from one acetate and 4 malonate units, to originate the characteristic pentaketide skeleton 7-methylmellein (7-MM) of the OTA molecule. The newly identified cyclase otaY might be involved in the polyketide cyclization reaction during the initial steps of the OTA biosynthesis. 7-MM is then oxidized into 7-carboxymellein (also called ochratoxin beta) by the cytochrome P450 monooxygenase otaC. The NRPS encoded by the otaB gene is involved in the linking of phenylalanine to the dihydroisocoumarin ring. The reaction catalyzed by NRPS results in the production of ochratoxin B (OTB), which is the non-chlorinated analog of OTA and which subsequently serves as the substrate of the halogenase otaD for chlorination activity to form the final molecular structure of OTA, containing a chlorine atom in the C-5 position of the molecule. The sequence is that of Probable cyclase otaY from Aspergillus niger (strain ATCC MYA-4892 / CBS 513.88 / FGSC A1513).